The primary structure comprises 294 residues: Flavin-dependent thymidylate synthase (294 aa).

A ThyX domain is found at 27-250; sequence GFIRVIDYMG…PFTYEAFEEY (224 aa). FAD is bound by residues T73, 96–98, and E104; that span reads RHR. DUMP is bound by residues 93–96, 104–108, and R189; these read QWIR and EYSAR. The ThyX motif signature appears at 96-106; it reads RHRTASVNEYS. Residues 205–207 and H211 contribute to the FAD site; that span reads NLH. Residue R216 participates in dUMP binding. R216 acts as the Involved in ionization of N3 of dUMP, leading to its activation in catalysis.

This sequence belongs to the thymidylate synthase ThyX family. In terms of assembly, homotetramer. Requires FAD as cofactor.

The enzyme catalyses dUMP + (6R)-5,10-methylene-5,6,7,8-tetrahydrofolate + NADPH + H(+) = dTMP + (6S)-5,6,7,8-tetrahydrofolate + NADP(+). It functions in the pathway pyrimidine metabolism; dTTP biosynthesis. Its function is as follows. Catalyzes the reductive methylation of 2'-deoxyuridine-5'-monophosphate (dUMP) to 2'-deoxythymidine-5'-monophosphate (dTMP) while utilizing 5,10-methylenetetrahydrofolate (mTHF) as the methyl donor, and NADPH and FADH(2) as the reductant. The chain is Flavin-dependent thymidylate synthase from Rickettsia typhi (strain ATCC VR-144 / Wilmington).